The primary structure comprises 466 residues: Asparagine--tRNA ligase (466 aa).

This sequence belongs to the class-II aminoacyl-tRNA synthetase family. In terms of assembly, homodimer.

It is found in the cytoplasm. The enzyme catalyses tRNA(Asn) + L-asparagine + ATP = L-asparaginyl-tRNA(Asn) + AMP + diphosphate + H(+). This chain is Asparagine--tRNA ligase, found in Shewanella baltica (strain OS155 / ATCC BAA-1091).